The chain runs to 149 residues: Ribosome-binding factor A (149 aa).

The disordered stretch occupies residues 124-149; the sequence is AKLREGAVPAGDADPYKTSSKSESEE.

It belongs to the RbfA family. Monomer. Binds 30S ribosomal subunits, but not 50S ribosomal subunits or 70S ribosomes.

It is found in the cytoplasm. One of several proteins that assist in the late maturation steps of the functional core of the 30S ribosomal subunit. Associates with free 30S ribosomal subunits (but not with 30S subunits that are part of 70S ribosomes or polysomes). Required for efficient processing of 16S rRNA. May interact with the 5'-terminal helix region of 16S rRNA. The chain is Ribosome-binding factor A from Corynebacterium glutamicum (strain R).